The sequence spans 128 residues: Probable 4-amino-4-deoxy-L-arabinose-phosphoundecaprenol flippase subunit ArnF (128 aa).

The Cytoplasmic portion of the chain corresponds to 1–2 (MG). Residues 3–23 (LMWGLFSVIIASAAQLSLGFA) traverse the membrane as a helical segment. Topologically, residues 24–32 (ASHLPPMTH) are periplasmic. Residues 33 to 53 (LWDFIAALLAFGLDARILLLG) traverse the membrane as a helical segment. Residues 54-76 (LQGYLLSVFCWYKTLHKLALSKA) lie on the Cytoplasmic side of the membrane. The helical transmembrane segment at 77–97 (YALLSMSYVLVWIASMVLPGW) threads the bilayer. Over 98 to 100 (EGT) the chain is Periplasmic. The chain crosses the membrane as a helical span at residues 101–121 (FSLKALLGVACIMSGLMLIFL). At 122–128 (PTTKQRY) the chain is on the cytoplasmic side.

This sequence belongs to the ArnF family. Heterodimer of ArnE and ArnF.

The protein localises to the cell inner membrane. It functions in the pathway bacterial outer membrane biogenesis; lipopolysaccharide biosynthesis. In terms of biological role, translocates 4-amino-4-deoxy-L-arabinose-phosphoundecaprenol (alpha-L-Ara4N-phosphoundecaprenol) from the cytoplasmic to the periplasmic side of the inner membrane. This Escherichia coli O7:K1 (strain IAI39 / ExPEC) protein is Probable 4-amino-4-deoxy-L-arabinose-phosphoundecaprenol flippase subunit ArnF.